Consider the following 109-residue polypeptide: Glutaredoxin-8 (109 aa).

In terms of domain architecture, Glutaredoxin spans 5 to 109; that stretch reads VTKAEEMIKS…EELTKIGLLP (105 aa). Residues Cys-25 and Cys-28 are joined by a disulfide bond.

This sequence belongs to the glutaredoxin family. As to quaternary structure, monomer.

It localises to the cytoplasm. Glutathione-dependent oxidoreductase with lower activity compared to the other members of the glutaredoxin family. The disulfide bond functions as an electron carrier in the glutathione-dependent synthesis of deoxyribonucleotides by the enzyme ribonucleotide reductase. The chain is Glutaredoxin-8 (GRX8) from Saccharomyces cerevisiae (strain ATCC 204508 / S288c) (Baker's yeast).